Consider the following 370-residue polypeptide: Prolactin-releasing peptide receptor (370 aa).

The Extracellular segment spans residues 1–62 (MASLPTQGPA…LQLVHQLKGL (62 aa)). N-linked (GlcNAc...) asparagine glycans are attached at residues Asn27 and Asn36. The helical transmembrane segment at 63 to 83 (IVLLYSIVVVVGLVGNCLLVL) threads the bilayer. Residues 84 to 101 (VIARVRRLHNVTNFLIGN) are Cytoplasmic-facing. Residues 102–122 (LALSDVLMCTACVPLTLAYAF) traverse the membrane as a helical segment. Residues 123–126 (EPRG) lie on the Extracellular side of the membrane. The chain crosses the membrane as a helical span at residues 127-147 (WVFGGGLCHLVFFLQPVTVYV). A disulfide bridge connects residues Cys134 and Cys211. At 148-175 (SVFTLTTIAVDRYVVLVHPLRRRISLRF) the chain is on the cytoplasmic side. Residues 176 to 196 (SAYAVLAIWALSAVLALPAAL) traverse the membrane as a helical segment. Residues 197 to 225 (HTYHVELKPHRVRLCEEFWGSQERQRQLY) lie on the Extracellular side of the membrane. The chain crosses the membrane as a helical span at residues 226–246 (AWGLLLVTYLLPLLVILLSYV). Residues 247–276 (RVSVNLRNRVVPGCVTQSQADWDRARRRRT) are Cytoplasmic-facing. A helical membrane pass occupies residues 277-297 (FCLLVVVVVVFAVCWLPLHVF). Residues 298–317 (NLLRDLDPHAIDPYAFGLVQ) are Extracellular-facing. The helical transmembrane segment at 318-338 (LLCHWLAMSSACYNPFIYAWL) threads the bilayer. Residues 339–369 (HDSFREELRKLLLAWPRKIAPHGQSMTVSVV) are Cytoplasmic-facing. The segment at 365 to 370 (TVSVVI) is required for interaction with GRIP1, GRIP2 and PICK1.

This sequence belongs to the G-protein coupled receptor 1 family. As to quaternary structure, interacts through its C-terminal region with the PDZ domain-containing proteins GRIP1, GRIP2 and PICK1. Interacts with PDZ domains 4 and 5 of GRIP1 and with the PDZ domain of PICK1.

The protein localises to the cell membrane. Receptor for prolactin-releasing peptide (PrRP). Implicated in lactation, regulation of food intake and pain-signal processing. In Bos taurus (Bovine), this protein is Prolactin-releasing peptide receptor (PRLHR).